The primary structure comprises 309 residues: GTP cyclohydrolase MptA (309 aa).

The protein belongs to the GTP cyclohydrolase IV family. In terms of assembly, homodimer. Requires Fe(2+) as cofactor.

The enzyme catalyses GTP + H2O = 7,8-dihydroneopterin 2',3'-cyclic phosphate + formate + diphosphate + H(+). It functions in the pathway cofactor biosynthesis; 5,6,7,8-tetrahydromethanopterin biosynthesis. Converts GTP to 7,8-dihydro-D-neopterin 2',3'-cyclic phosphate, the first intermediate in the biosynthesis of coenzyme methanopterin. The polypeptide is GTP cyclohydrolase MptA (Haloquadratum walsbyi (strain DSM 16790 / HBSQ001)).